The chain runs to 445 residues: MKIFGTDGVRGKAGVKLTPMFVMRLGIAAGLYFKKHSQTNKILIGKDTRKSGYMVENALVSALTSIGYNVIQIGPMPTPAIAFLTEDMRCDAGIMISASHNPFEDNGIKFFNSYGYKLKEEEEKAIEEIFHDEELLHSSYKVGESIGSAKRIDDVIGRYIVHLKHSFPKHLNLQSLRIVLDTANGAAYKVAPVVFSELGADVLVINDEPNGCNINEQCGALHPNQLSQEVKKYRADLGFAFDGDADRLVVVDNLGNIVHGDKLLGVLGVYQKSKNALSSQAIVATSMSNLALKEYLKSQDLELKHCAIGDKFVSECMRLNKANFGGEQSGHIIFSDYAKTGDGLVCALQVSALVLESKQASSVALNPFELYPQNLVNLNVQKKPPLESLKGYSALLKELDQLEIRHLIRYSGTENKLRILLEAKDEKLLESKMQELKEFFEGHLC.

Serine 99 (phosphoserine intermediate) is an active-site residue. Mg(2+) is bound by residues serine 99, aspartate 242, aspartate 244, and aspartate 246. At serine 99 the chain carries Phosphoserine.

It belongs to the phosphohexose mutase family. The cofactor is Mg(2+). Post-translationally, activated by phosphorylation.

The enzyme catalyses alpha-D-glucosamine 1-phosphate = D-glucosamine 6-phosphate. Functionally, catalyzes the conversion of glucosamine-6-phosphate to glucosamine-1-phosphate. The sequence is that of Phosphoglucosamine mutase from Helicobacter pylori (strain G27).